A 154-amino-acid chain; its full sequence is C-type lectin 16 (154 aa).

An N-terminal signal peptide occupies residues M1–S20. The 126-residue stretch at D27–E152 folds into the C-type lectin domain. Intrachain disulfides connect C46-C151 and C123-C143.

As to quaternary structure, (Microbial infection) Interacts with non-structural protein 1 of dengue virus type 2. Interacts with envelope protein E of dengue virus type 2. In terms of tissue distribution, female salivary gland (at protein level). Not detected in female carcass without salivary glands (at protein level). Not detected in male tissues (at protein level).

Its subcellular location is the secreted. Its function is as follows. Putative lectin. May have a regulatory role in mosquito immunity. Probably suppresses replication of dengue virus type 2 in mosquito salivary glands. The chain is C-type lectin 16 from Aedes aegypti (Yellowfever mosquito).